The sequence spans 146 residues: Cytochrome c' (146 aa).

Positions 1–21 (MKLRIATIAGLVVLGSGFAVA) are cleaved as a signal peptide. Arginine 29, threonine 86, alanine 87, cysteine 134, cysteine 137, and histidine 138 together coordinate heme c.

In terms of assembly, monomer. Post-translationally, binds 1 heme c group covalently per subunit.

Its function is as follows. Cytochrome c' is the most widely occurring bacterial c-type cytochrome. Cytochromes c' are high-spin proteins and the heme has no sixth ligand. Their exact function is not known. This Rhodopseudomonas palustris (strain ATCC BAA-98 / CGA009) protein is Cytochrome c' (cycA).